The primary structure comprises 105 residues: Keratin-associated protein 17-1 (105 aa).

As to quaternary structure, interacts with hair keratins.

In terms of biological role, in the hair cortex, hair keratin intermediate filaments are embedded in an interfilamentous matrix, consisting of hair keratin-associated proteins (KRTAP), which are essential for the formation of a rigid and resistant hair shaft through their extensive disulfide bond cross-linking with abundant cysteine residues of hair keratins. The matrix proteins include the high-sulfur and high-glycine-tyrosine keratins. The protein is Keratin-associated protein 17-1 (KRTAP17-1) of Homo sapiens (Human).